Consider the following 199-residue polypeptide: Oligoribonuclease (199 aa).

One can recognise an Exonuclease domain in the interval 5-170 (LVWIDCEMTG…ADIRESIREL (166 aa)). Residue Tyr-127 is part of the active site.

It belongs to the oligoribonuclease family.

The protein localises to the cytoplasm. Its function is as follows. 3'-to-5' exoribonuclease specific for small oligoribonucleotides. The protein is Oligoribonuclease of Rhodococcus jostii (strain RHA1).